The sequence spans 133 residues: Putative redox protein FMP46, mitochondrial (133 aa).

Residues 1–21 constitute a mitochondrion transit peptide; it reads MSFWKTLQRQPRTISLFTNDI. Residue C97 is part of the active site.

It belongs to the FMP46 family.

The protein localises to the mitochondrion. Its function is as follows. Putative mitochondrial redox protein which could be involved in the reduction of small toxic molecules. The polypeptide is Putative redox protein FMP46, mitochondrial (FMP46) (Saccharomyces cerevisiae (strain ATCC 204508 / S288c) (Baker's yeast)).